The following is a 192-amino-acid chain: 7-methyl-GTP pyrophosphatase (192 aa).

Aspartate 69 (proton acceptor) is an active-site residue.

The protein belongs to the Maf family. YceF subfamily. A divalent metal cation is required as a cofactor.

Its subcellular location is the cytoplasm. The enzyme catalyses N(7)-methyl-GTP + H2O = N(7)-methyl-GMP + diphosphate + H(+). Its function is as follows. Nucleoside triphosphate pyrophosphatase that hydrolyzes 7-methyl-GTP (m(7)GTP). May have a dual role in cell division arrest and in preventing the incorporation of modified nucleotides into cellular nucleic acids. The chain is 7-methyl-GTP pyrophosphatase from Pseudomonas savastanoi pv. phaseolicola (strain 1448A / Race 6) (Pseudomonas syringae pv. phaseolicola (strain 1448A / Race 6)).